A 364-amino-acid chain; its full sequence is Probable tartrate dehydrogenase/decarboxylase TtuC (364 aa).

3 residues coordinate Mn(2+): Asp222, Asp246, and Asp250.

This sequence belongs to the isocitrate and isopropylmalate dehydrogenases family. Requires Mg(2+) as cofactor. Mn(2+) serves as cofactor. K(+) is required as a cofactor.

Its subcellular location is the cytoplasm. The catalysed reaction is tartrate + NAD(+) = 2-hydroxy-3-oxosuccinate + NADH + H(+). It catalyses the reaction (2R,3S)-tartrate + NAD(+) = 2-hydroxy-3-oxosuccinate + NADH + H(+). It carries out the reaction (2R,3R)-tartrate + NAD(+) = 2-hydroxy-3-oxosuccinate + NADH + H(+). The enzyme catalyses (2R,3R)-tartrate + H(+) = (R)-glycerate + CO2. The catalysed reaction is (R)-malate + NAD(+) = pyruvate + CO2 + NADH. Its pathway is carbohydrate acid metabolism; tartrate degradation; 2-hydroxy-3-oxosuccinate from L-tartrate: step 1/1. It functions in the pathway carbohydrate acid metabolism; tartrate degradation; 2-hydroxy-3-oxosuccinate from meso-tartrate: step 1/1. It participates in carbohydrate acid metabolism; tartrate degradation; D-glycerate from L-tartrate: step 1/1. In terms of biological role, has multiple catalytic activities. Apart from catalyzing the oxidation of (+)-tartrate to oxaloglycolate, also converts meso-tartrate to D-glycerate and catalyzes the oxidative decarboxylation of D-malate to pyruvate. In Agrobacterium vitis (Rhizobium vitis), this protein is Probable tartrate dehydrogenase/decarboxylase TtuC (ttuC).